Reading from the N-terminus, the 281-residue chain is Phosphonates import ATP-binding protein PhnC 2 (281 aa).

The region spanning 4–238 (LTVDNVTKTY…LVDDLYGNVE (235 aa)) is the ABC transporter domain. 35-42 (GESGAGKS) serves as a coordination point for ATP. Residues 243–281 (ATDNSDNSTVDTSDGTRYDTETGSDGTDEVDVIGRQVES) are disordered. Residues 244–255 (TDNSDNSTVDTS) show a composition bias toward low complexity.

The protein belongs to the ABC transporter superfamily. Phosphonates importer (TC 3.A.1.9.1) family. The complex is composed of two ATP-binding proteins (PhnC), two transmembrane proteins (PhnE) and a solute-binding protein (PhnD).

It is found in the cell membrane. The enzyme catalyses phosphonate(out) + ATP + H2O = phosphonate(in) + ADP + phosphate + H(+). In terms of biological role, part of the ABC transporter complex PhnCDE involved in phosphonates import. Responsible for energy coupling to the transport system. The chain is Phosphonates import ATP-binding protein PhnC 2 from Haloquadratum walsbyi (strain DSM 16790 / HBSQ001).